The following is a 427-amino-acid chain: Endothelin-1 receptor (427 aa).

A signal peptide spans 1-20; the sequence is MSIFCLAAYFWLTMVGGVMA. Over 21–80 the chain is Extracellular; that stretch reads DNPERYSANLSSHMEDFTPFPGTEINFLGTTHRPPNLALPSNGSMHGYCPQQTKITTAFK. N-linked (GlcNAc...) asparagine glycosylation is found at N29 and N62. The helical transmembrane segment at 81–102 threads the bilayer; it reads YINTVISCTIFIVGMVGNATLL. Over 103 to 112 the chain is Cytoplasmic; sequence RIIYQNKCMR. The chain crosses the membrane as a helical span at residues 113 to 132; that stretch reads NGPNALIASLALGDLIYVVI. The Extracellular portion of the chain corresponds to 133–159; it reads DLPINVFKLLAGRWPFDHNDFGVFLCK. The cysteines at positions 158 and 239 are disulfide-linked. A helical membrane pass occupies residues 160 to 181; sequence LFPFLQKSSVGITVLNLCALSV. The Cytoplasmic portion of the chain corresponds to 182-205; that stretch reads DRYRAVASWSRVQGIGIPLITAIE. The helical transmembrane segment at 206–229 threads the bilayer; that stretch reads IVSIWILSFILAIPEAIGFVMVPF. Residues 230–256 are Extracellular-facing; it reads EYKGELHRTCMLNATSKFMEFYQDVKD. N242 is a glycosylation site (N-linked (GlcNAc...) asparagine). Residues 257–278 form a helical membrane-spanning segment; it reads WWLFGFYFCMPLVCTAIFYTLM. Topologically, residues 279–306 are cytoplasmic; sequence TCEMLNRRNGSLRIALSEHLKQRREVAK. A helical membrane pass occupies residues 307 to 328; the sequence is TVFCLVVIFALCWFPLHLSRIL. At 329-347 the chain is on the extracellular side; sequence KKTVYDEMDKNRCELLSFL. A helical membrane pass occupies residues 348–372; it reads LLMDYIGINLATMNSCINPIALYFV. At 373–427 the chain is on the cytoplasmic side; that stretch reads SKKFKNCFQSCLCCCCHQSKSLMTSVPMNGTSIQWKNQEQNNHNTERSSHKDSMN. Residues 408–427 form a disordered region; the sequence is KNQEQNNHNTERSSHKDSMN. Positions 416–427 are enriched in basic and acidic residues; that stretch reads NTERSSHKDSMN. A Phosphoserine modification is found at S425.

Belongs to the G-protein coupled receptor 1 family. Endothelin receptor subfamily. EDNRA sub-subfamily. Interacts with HDAC7 and KAT5.

It is found in the cell membrane. Functionally, receptor for endothelin-1. Mediates its action by association with G proteins that activate a phosphatidylinositol-calcium second messenger system. The rank order of binding affinities for ET-A is: ET1 &gt; ET2 &gt;&gt; ET3. This is Endothelin-1 receptor from Mus musculus (Mouse).